The following is a 331-amino-acid chain: Ketol-acid reductoisomerase (NADP(+)) (331 aa).

The region spanning 2–182 (AQLFYDSDAD…GGTRAGILET (181 aa)) is the KARI N-terminal Rossmann domain. NADP(+) contacts are provided by residues 25–28 (YGSQ), Ser-51, Ser-53, and 83–86 (DEFQ). His-108 is a catalytic residue. An NADP(+)-binding site is contributed by Gly-134. Residues 183-328 (NFKEETETDL…KGLRAMFSWL (146 aa)) form the KARI C-terminal knotted domain. Residues Asp-191, Glu-195, Glu-227, and Glu-231 each contribute to the Mg(2+) site. Ser-252 serves as a coordination point for substrate.

It belongs to the ketol-acid reductoisomerase family. It depends on Mg(2+) as a cofactor.

The catalysed reaction is (2R)-2,3-dihydroxy-3-methylbutanoate + NADP(+) = (2S)-2-acetolactate + NADPH + H(+). It catalyses the reaction (2R,3R)-2,3-dihydroxy-3-methylpentanoate + NADP(+) = (S)-2-ethyl-2-hydroxy-3-oxobutanoate + NADPH + H(+). It functions in the pathway amino-acid biosynthesis; L-isoleucine biosynthesis; L-isoleucine from 2-oxobutanoate: step 2/4. It participates in amino-acid biosynthesis; L-valine biosynthesis; L-valine from pyruvate: step 2/4. Involved in the biosynthesis of branched-chain amino acids (BCAA). Catalyzes an alkyl-migration followed by a ketol-acid reduction of (S)-2-acetolactate (S2AL) to yield (R)-2,3-dihydroxy-isovalerate. In the isomerase reaction, S2AL is rearranged via a Mg-dependent methyl migration to produce 3-hydroxy-3-methyl-2-ketobutyrate (HMKB). In the reductase reaction, this 2-ketoacid undergoes a metal-dependent reduction by NADPH to yield (R)-2,3-dihydroxy-isovalerate. The chain is Ketol-acid reductoisomerase (NADP(+)) from Prochlorococcus marinus (strain MIT 9303).